A 359-amino-acid polypeptide reads, in one-letter code: Ribosomal RNA small subunit methyltransferase mra1 (359 aa).

The segment covering 1–10 (MPTYSKRKSR) has biased composition (basic residues). 2 disordered regions span residues 1 to 62 (MPTY…EDEE) and 98 to 118 (VKSD…VKAR). The residue at position 12 (S12) is a Phosphoserine. Positions 18–39 (KTNQPKFIKRSQSSETITSGET) are enriched in polar residues. T33 is modified (phosphothreonine). Residue S100 is modified to Phosphoserine. Residues L287, G314, 319-321 (GPD), and 334-339 (ISDYPL) contribute to the S-adenosyl-L-methionine site.

It belongs to the class IV-like SAM-binding methyltransferase superfamily. RNA methyltransferase NEP1 family. Homodimer.

Its subcellular location is the nucleus. The protein resides in the nucleolus. The enzyme catalyses a pseudouridine in rRNA + S-adenosyl-L-methionine = an N(1)-methylpseudouridine in rRNA + S-adenosyl-L-homocysteine + H(+). Functionally, S-adenosyl-L-methionine-dependent pseudouridine N(1)-methyltransferase that methylates the pseudouridine corresponding to position 1189 (Psi1189) in S.cerevisiae 18S rRNA. Involved the biosynthesis of the hypermodified N1-methyl-N3-(3-amino-3-carboxypropyl) pseudouridine (m1acp3-Psi) conserved in eukaryotic 18S rRNA. Also has an essential role in 40S ribosomal subunit biogenesis independent on its methyltransferase activity, facilitating the incorporation of ribosomal protein S19 during the formation of pre-ribosomes. Essential for cell growth. It also has a key role in promoting the mating function. The protein is Ribosomal RNA small subunit methyltransferase mra1 of Schizosaccharomyces pombe (strain 972 / ATCC 24843) (Fission yeast).